Consider the following 266-residue polypeptide: Protein phosphatase 1 regulatory subunit 35 (266 aa).

Residues 1–10 show a composition bias toward polar residues; sequence MMVYNGSQLE. The disordered stretch occupies residues 1–118; the sequence is MMVYNGSQLE…QDLGTPVQQS (118 aa). A compositionally biased stretch (pro residues) spans 21-38; the sequence is PGPPPEPRAPEPGAPVPE. S46 and S51 each carry phosphoserine. Basic residues predominate over residues 62–79; the sequence is GRRKGRADRRGGARKGRQ. Residues 86 to 97 show a composition bias toward pro residues; the sequence is PPSPVRSGPPPA.

Belongs to the PPP1R35 family. Interacts with PPP1CA; this interaction mediates the PPP1CA phosphatase activity inhibition. Interacts with RTTN; this interaction allows the mutual recruitment to the centriole.

It is found in the cytoplasm. It localises to the cytoskeleton. Its subcellular location is the microtubule organizing center. The protein resides in the centrosome. The protein localises to the centriole. Functionally, during centriole duplication, plays a role in the centriole elongation by promoting the recruitment of the microtubule-binding elongation machinery through its interaction with RTTN, leading to the centriole to centrosome conversion. In addition may play a role in the primary cilia assembly. In Bos taurus (Bovine), this protein is Protein phosphatase 1 regulatory subunit 35.